The sequence spans 215 residues: Outer-membrane lipoprotein carrier protein (215 aa).

The signal sequence occupies residues 1-24 (MFVLKARHLMAAGLVSLAAWSAGA).

The protein belongs to the LolA family. Monomer.

The protein resides in the periplasm. Participates in the translocation of lipoproteins from the inner membrane to the outer membrane. Only forms a complex with a lipoprotein if the residue after the N-terminal Cys is not an aspartate (The Asp acts as a targeting signal to indicate that the lipoprotein should stay in the inner membrane). This Ralstonia nicotianae (strain ATCC BAA-1114 / GMI1000) (Ralstonia solanacearum) protein is Outer-membrane lipoprotein carrier protein.